We begin with the raw amino-acid sequence, 205 residues long: Orotate phosphoribosyltransferase (205 aa).

116 to 124 (EDIITTGGS) serves as a coordination point for 5-phospho-alpha-D-ribose 1-diphosphate. 2 residues coordinate orotate: T120 and R148.

It belongs to the purine/pyrimidine phosphoribosyltransferase family. PyrE subfamily. As to quaternary structure, homodimer. Mg(2+) serves as cofactor.

The catalysed reaction is orotidine 5'-phosphate + diphosphate = orotate + 5-phospho-alpha-D-ribose 1-diphosphate. The protein operates within pyrimidine metabolism; UMP biosynthesis via de novo pathway; UMP from orotate: step 1/2. In terms of biological role, catalyzes the transfer of a ribosyl phosphate group from 5-phosphoribose 1-diphosphate to orotate, leading to the formation of orotidine monophosphate (OMP). This Wolinella succinogenes (strain ATCC 29543 / DSM 1740 / CCUG 13145 / JCM 31913 / LMG 7466 / NCTC 11488 / FDC 602W) (Vibrio succinogenes) protein is Orotate phosphoribosyltransferase.